The following is a 472-amino-acid chain: 2-oxoisovalerate dehydrogenase subunit alpha 1, mitochondrial (472 aa).

The N-terminal 56 residues, 1–56 (MAIWFARSKTLVSSLRHNLNLSTILIKRDYSHRPIFYTTSQLSSTAYLSPFGSLRH), are a transit peptide targeting the mitochondrion. 185-187 (QYR) is a thiamine diphosphate binding site. K(+) contacts are provided by S234, T239, and Q240.

The protein belongs to the BCKDHA family. As to quaternary structure, heterotetramer of alpha and beta chains. Requires thiamine diphosphate as cofactor.

The protein resides in the mitochondrion matrix. It carries out the reaction N(6)-[(R)-lipoyl]-L-lysyl-[protein] + 3-methyl-2-oxobutanoate + H(+) = N(6)-[(R)-S(8)-2-methylpropanoyldihydrolipoyl]-L-lysyl-[protein] + CO2. Its function is as follows. The branched-chain alpha-keto dehydrogenase complex catalyzes the overall conversion of alpha-keto acids to acyl-CoA and CO(2). It contains multiple copies of three enzymatic components: branched-chain alpha-keto acid decarboxylase (E1), lipoamide acyltransferase (E2) and lipoamide dehydrogenase (E3). Required during sugar starvation. The chain is 2-oxoisovalerate dehydrogenase subunit alpha 1, mitochondrial from Arabidopsis thaliana (Mouse-ear cress).